A 449-amino-acid polypeptide reads, in one-letter code: tRNA (guanine(37)-N(1))-methyltransferase (449 aa).

Residues H216, 254–255 (DL), 282–283 (DG), and N345 each bind S-adenosyl-L-methionine.

It belongs to the class I-like SAM-binding methyltransferase superfamily. TRM5/TYW2 family. In terms of assembly, monomer.

The protein resides in the mitochondrion matrix. Its subcellular location is the nucleus. It is found in the cytoplasm. The enzyme catalyses guanosine(37) in tRNA + S-adenosyl-L-methionine = N(1)-methylguanosine(37) in tRNA + S-adenosyl-L-homocysteine + H(+). Its function is as follows. Specifically methylates the N1 position of guanosine-37 in various cytoplasmic and mitochondrial tRNAs. Methylation is not dependent on the nature of the nucleoside 5' of the target nucleoside. This is the first step in the biosynthesis of wybutosine (yW), a modified base adjacent to the anticodon of tRNAs and required for accurate decoding. The protein is tRNA (guanine(37)-N(1))-methyltransferase of Candida albicans (strain WO-1) (Yeast).